We begin with the raw amino-acid sequence, 143 residues long: Large ribosomal subunit protein uL15 (143 aa).

The interval 20-52 (GRGIGSGKGKTAGRGHKGQHSRAGGYHKVGFEG) is disordered. Positions 30-39 (TAGRGHKGQH) are enriched in basic residues.

It belongs to the universal ribosomal protein uL15 family. Part of the 50S ribosomal subunit.

Binds to the 23S rRNA. This chain is Large ribosomal subunit protein uL15, found in Coxiella burnetii (strain CbuK_Q154) (Coxiella burnetii (strain Q154)).